A 304-amino-acid chain; its full sequence is MDRLETTIAGVKLKSPVMNASGTAAYGQQMAKNIDLNELGAFVIKSTTMEPRAGHPWPTTAATTGGWLNAVGLKNPGIEHVLAYELPWLAENYPDLPIVGSIAGSNPDDYVEVAKRMATAPNVKFIEVNISCPNVAKGGLAFGTDPVVVEDMTRRIKAVVPNKPVFMKLTPGVTEIVPIALAAERGGADGLVMINTLMGMEIDLETRKPRLSNGTGGLSGKAIHPIAVRMIHQVREVTNLPIIGVGGVFSAKDALELMVAGAGAVQVGSANYGNPHACHDIIQGLVPAMDQYHFNNIAEFSSEK.

Residues Ser-21 and 45–46 (KS) each bind FMN. Residues Lys-45, 69–73 (NAVGL), and Asn-129 each bind substrate. Asn-129 is a binding site for FMN. The Nucleophile role is filled by Cys-132. The FMN site is built by Lys-168 and Ile-194. Position 195-196 (195-196 (NT)) interacts with substrate. Residues Gly-220, 246–247 (GG), and 268–269 (GS) each bind FMN.

The protein belongs to the dihydroorotate dehydrogenase family. Type 1 subfamily. In terms of assembly, homodimer. FMN is required as a cofactor.

The protein localises to the cytoplasm. The catalysed reaction is (S)-dihydroorotate + fumarate = orotate + succinate. Its pathway is pyrimidine metabolism; UMP biosynthesis via de novo pathway. Its function is as follows. Catalyzes the conversion of dihydroorotate to orotate with fumarate as the electron acceptor. The polypeptide is Putative dihydroorotate dehydrogenase A (fumarate) (pyrD) (Pediococcus pentosaceus (strain ATCC 25745 / CCUG 21536 / LMG 10740 / 183-1w)).